The following is a 256-amino-acid chain: Sorbitol dehydrogenase (256 aa).

Residues 15 to 17 (RGI), Asp-36, 59 to 60 (DV), Asn-86, Tyr-152, Lys-156, and 182 to 187 (PGVVDG) each bind NAD(+). Tyr-152 acts as the Proton acceptor in catalysis.

Belongs to the short-chain dehydrogenases/reductases (SDR) family. In terms of assembly, homodimer. May function as a tetramer in vivo.

It carries out the reaction keto-D-fructose + NADH + H(+) = D-sorbitol + NAD(+). It catalyses the reaction galactitol + NAD(+) = keto-D-tagatose + NADH + H(+). The enzyme catalyses L-iditol + NAD(+) = keto-L-sorbose + NADH + H(+). Inhibited by DTT, N-bromosuccinimide and iodoacetic acid. Catalyzes the oxidation of D-sorbitol (D-glucitol) to D-fructose. Can also catalyze the oxidation of galactitol to D-tagatose and the oxidation of L-iditol, with lower efficiency. This Cereibacter sphaeroides (Rhodobacter sphaeroides) protein is Sorbitol dehydrogenase (polS).